Reading from the N-terminus, the 491-residue chain is Glycogen synthase (491 aa).

K15 serves as a coordination point for ADP-alpha-D-glucose.

Belongs to the glycosyltransferase 1 family. Bacterial/plant glycogen synthase subfamily.

The catalysed reaction is [(1-&gt;4)-alpha-D-glucosyl](n) + ADP-alpha-D-glucose = [(1-&gt;4)-alpha-D-glucosyl](n+1) + ADP + H(+). It functions in the pathway glycan biosynthesis; glycogen biosynthesis. Its function is as follows. Synthesizes alpha-1,4-glucan chains using ADP-glucose. This is Glycogen synthase from Hydrogenovibrio crunogenus (strain DSM 25203 / XCL-2) (Thiomicrospira crunogena).